A 211-amino-acid polypeptide reads, in one-letter code: Protein GrpE (211 aa).

A disordered region spans residues 1–43; it reads MTDETTKNGPDATAADAAADAAANVEIDNSVQEEAKQPDPLEL. The segment covering 11-23 has biased composition (low complexity); sequence DATAADAAADAAA. Residues 33-43 are compositionally biased toward basic and acidic residues; the sequence is EEAKQPDPLEL.

It belongs to the GrpE family. As to quaternary structure, homodimer.

The protein localises to the cytoplasm. Functionally, participates actively in the response to hyperosmotic and heat shock by preventing the aggregation of stress-denatured proteins, in association with DnaK and GrpE. It is the nucleotide exchange factor for DnaK and may function as a thermosensor. Unfolded proteins bind initially to DnaJ; upon interaction with the DnaJ-bound protein, DnaK hydrolyzes its bound ATP, resulting in the formation of a stable complex. GrpE releases ADP from DnaK; ATP binding to DnaK triggers the release of the substrate protein, thus completing the reaction cycle. Several rounds of ATP-dependent interactions between DnaJ, DnaK and GrpE are required for fully efficient folding. The polypeptide is Protein GrpE (Rhizobium etli (strain ATCC 51251 / DSM 11541 / JCM 21823 / NBRC 15573 / CFN 42)).